A 167-amino-acid chain; its full sequence is MSLALRSELVVDKTKRKKRRELSEEQKQEIKDAFELFDTDKDEAIDYHELKVAMRALGFDVKKADVLKILKDYDREATGKITFEDFNEVVTDWILERDPHEEILKAFKLFDDDDSGKISLRNLRRVARELGENMSDEELRAMIEEFDKDGDGEINQEEFIAIMTGDI.

4 consecutive EF-hand domains span residues glutamate 25–aspartate 60, valine 61–glutamate 96, aspartate 98–asparagine 133, and methionine 134–isoleucine 167. At serine 135 the chain carries Phosphoserine. Aspartate 147, aspartate 149, aspartate 151, glutamate 153, and glutamate 158 together coordinate Ca(2+).

Belongs to the centrin family. In terms of assembly, monomer. Component of the nuclear pore complex (NPC)-associated TREX-2 complex (transcription and export complex 2), composed of at least GANP, 2 copies of ENY2, PCID2, SEM1/DSS1, and either centrin CETN2 or centrin CETN3. The TREX-2 complex also associates with ALYREF/ALY and with the nucleoporin NUP153. Interacts with USP49.

Its subcellular location is the cytoplasm. The protein localises to the cytoskeleton. It is found in the microtubule organizing center. It localises to the centrosome. The protein resides in the nucleus. Its subcellular location is the nucleolus. The protein localises to the nucleus envelope. It is found in the nuclear pore complex. It localises to the centriole. In terms of biological role, plays a fundamental role in microtubule-organizing center structure and function. Functionally, as a component of the TREX-2 complex, involved in the export of mRNAs to the cytoplasm through the nuclear pores. The sequence is that of Centrin-3 (CETN3) from Homo sapiens (Human).